The following is a 312-amino-acid chain: Tetraacyldisaccharide 4'-kinase (312 aa).

60–67 (IAGGSGKT) lines the ATP pocket.

It belongs to the LpxK family.

It carries out the reaction a lipid A disaccharide + ATP = a lipid IVA + ADP + H(+). The protein operates within glycolipid biosynthesis; lipid IV(A) biosynthesis; lipid IV(A) from (3R)-3-hydroxytetradecanoyl-[acyl-carrier-protein] and UDP-N-acetyl-alpha-D-glucosamine: step 6/6. Transfers the gamma-phosphate of ATP to the 4'-position of a tetraacyldisaccharide 1-phosphate intermediate (termed DS-1-P) to form tetraacyldisaccharide 1,4'-bis-phosphate (lipid IVA). The chain is Tetraacyldisaccharide 4'-kinase from Helicobacter pylori (strain ATCC 700392 / 26695) (Campylobacter pylori).